The chain runs to 305 residues: Mat- sexual cell fertilization-promoting factor (305 aa).

The segment at residues 38–93 (PAKKKVNGFMGYRSYYSSMFSQLPQKERSPILTTLWQQDPFHKEWDFMCAVYSAIR) is a DNA-binding region (alpha box).

Belongs to the MATALPHA1 family.

Its subcellular location is the nucleus. In terms of biological role, controls fertilization, probably by determining the mating type. May be involved in the post-fertilization steps of the sexual cycle besides mat+. It is required for the developmental events that occur in the female organ after fertilization. The polypeptide is Mat- sexual cell fertilization-promoting factor (FMR1) (Podospora anserina (Pleurage anserina)).